Consider the following 44-residue polypeptide: NWSSLIFSLNLQRRILPKPTRKSRIKNKQKRPRSRTLTAVHDAI.

Positions 18–34 (KPTRKSRIKNKQKRPRS) are enriched in basic residues. Positions 18–44 (KPTRKSRIKNKQKRPRSRTLTAVHDAI) are disordered.

The protein belongs to the eukaryotic ribosomal protein eS7 family. Component of the small ribosomal subunit.

Its subcellular location is the cytoplasm. It is found in the cytoskeleton. It localises to the microtubule organizing center. The protein resides in the centrosome. The protein localises to the nucleus. Functionally, component of the small ribosomal subunit. The ribosome is a large ribonucleoprotein complex responsible for the synthesis of proteins in the cell. Required for rRNA maturation. In Salmo salar (Atlantic salmon), this protein is Small ribosomal subunit protein eS7 (rps7).